A 478-amino-acid polypeptide reads, in one-letter code: Probable sodium/glutamine symporter GlnT (478 aa).

The next 10 helical transmembrane spans lie at 14 to 34, 85 to 105, 145 to 165, 185 to 205, 211 to 231, 236 to 256, 298 to 318, 342 to 362, 381 to 401, and 411 to 431; these read DLLW…YFTF, IAIA…IIAI, WMGA…FNSV, LGLI…KRIA, IVVV…FSNI, GVLA…GGAL, AFGV…IILF, GSWA…CALI, LIFV…VAKV, and FMGL…KVVF.

This sequence belongs to the alanine or glycine:cation symporter (AGCS) (TC 2.A.25) family.

It is found in the cell membrane. Probably functions as a sodium/glutamine symporter for glutamine uptake. The chain is Probable sodium/glutamine symporter GlnT (glnT) from Bacillus subtilis (strain 168).